The sequence spans 60 residues: Mastoparan-A (60 aa).

Residues 1 to 27 (MKNTILILFTAFIALLGFFGMSAEALA) form the signal peptide. 4 AXPX repeats span residues 27–30 (ADPI), 31–34 (ADPL), 35–38 (AGPN), and 41–43 (ADP). Residues 28–45 (DPIADPLAGPNAEADPEA) constitute a propeptide that is removed on maturation. Isoleucine amide is present on isoleucine 59.

This sequence belongs to the MCD family. Mastoparan subfamily. Expressed by the venom gland.

Its subcellular location is the secreted. It localises to the target cell membrane. Functionally, antimicrobial and mast cell degranulating peptide. Has broad spectrum antibacterial activity against both Gram-positive and Gram-negative bacteria (S.aureus MIC=32-64 ug/ml, S.xylosus MIC=2 ug/ml, S.alactolyticus MIC=12 ug/ml, C.koseri MIC=4 ug/ml, E.coli MIC=8 ug/ml, K.pneumoniae MIC=32 ug/ml, P.aerugiosa MIC=192 ug/ml, S.choleraesuis MIC=32 ug/ml, S.typhimurium MIC=32 ug/ml, V.parahamelytics MIC=16 ug/ml). Affects membrane permeability of E.coli. Shows hemolytic activities on sheep, chicken and human erythrocytes. Its mast cell degranulation activity may be related to the activation of G-protein coupled receptors in mast cells as well as interaction with other proteins located in cell endosomal membranes in the mast cells. This chain is Mastoparan-A, found in Vespa analis (Yellow-vented hornet).